A 142-amino-acid chain; its full sequence is MALAAVKWAISSRTMLKHLFPVENGALYCVGHKSTYSSLPDDYNCKVELALTSDARTIVCYHPSVDIPYEHTKPIPRPDPVHNNEETHDLVLKTRLEEKSEHLEQGPMIEQLSKMFFTTKHRWYPRGQYHRRRRKLNPPKDR.

The transit peptide at 1–32 (MALAAVKWAISSRTMLKHLFPVENGALYCVGH) directs the protein to the mitochondrion.

This sequence belongs to the mitochondrion-specific ribosomal protein mL42 family. In terms of assembly, component of the mitochondrial ribosome large subunit (39S) which comprises a 16S rRNA and about 50 distinct proteins. Component of the mitochondrial ribosome small subunit (28S) which comprises a 12S rRNA and about 30 distinct proteins.

It is found in the mitochondrion. The polypeptide is Large ribosomal subunit protein mL42 (MRPL42) (Bos taurus (Bovine)).